The chain runs to 278 residues: Small ribosomal subunit protein uS2 (278 aa).

N-acetylserine is present on S2. Residues 258–278 (TNEGKTAADEWATGAQTQSNW) are disordered.

It belongs to the universal ribosomal protein uS2 family. In terms of assembly, component of the small ribosomal subunit. Mature ribosomes consist of a small (40S) and a large (60S) subunit. The 40S subunit contains about 33 different proteins and 1 molecule of RNA (18S). The 60S subunit contains about 49 different proteins and 3 molecules of RNA (28S, 5.8S and 5S). Interacts with rps-21.

Its subcellular location is the cytoplasm. Functionally, required for the assembly and/or stability of the 40S ribosomal subunit. Required for the processing of the 20S rRNA-precursor to mature 18S rRNA in a late step of the maturation of 40S ribosomal subunits. This Caenorhabditis briggsae protein is Small ribosomal subunit protein uS2.